The sequence spans 681 residues: MSKTFLRPKVSSTKVTDWVDPSFDDFLECSGVSTITATSLGVNNSSHRRKNGPSTLESSRFPARKRGNLSSLEQIYGLENSKEYLSENEPWVDKYKPETQHELAVHKKKIEEVETWLKAQVLERQPKQGGSILLITGPPGCGKTTTLKILSKEHGIQVQEWINPVLPDFQKDDFKGMFNTESSFHMFPYQSQIAVFKEFLLRATKYNKLQMLGDDLRTDKKIILVEDLPNQFYRDSHTLHEVLRKYVRIGRCPLIFIISDSLSGDNNQRLLFPKEIQEECSISNISFNPVAPTIMMKFLNRIVTIEANKNGGKITVPDKTSLELLCQGCSGDIRSAINSLQFSSSKGENNLRPRKKGMSLKSDAVLSKSKRRKKPDRVFENQEVQAIGGKDVSLFLFRALGKILYCKRASLTELDSPRLPSHLSEYERDTLLVEPEEVVEMSHMPGDLFNLYLHQNYIDFFMEIDDIVRASEFLSFADILSGDWNTRSLLREYSTSIATRGVMHSNKARGYAHCQGGGSSFRPLHKPQWFLINKKYRENCLAAKALFPDFCLPALCLQTQLLPYLALLTIPMRNQAQISFIQDIGRLPLKRHFGRLKMEALTDREHGMIDPDSGDEAQLNGGHSAEESLGEPTQATVPETWSLPLSQNSASELPASQPQPFSAQGDMEENIIIEDYESDGT.

The RAD1-binding motif signature appears at 17 to 25; it reads DWVDPSFDD. The interval 42-61 is disordered; the sequence is VNNSSHRRKNGPSTLESSRF. Position 55 is a phosphothreonine (T55). A phosphoserine mark is found at S71 and S86. Residue 137–144 coordinates ATP; it reads GPPGCGKT. 2 disordered regions span residues 344–377 and 606–681; these read SSKGENNLRPRKKGMSLKSDAVLSKSKRRKKPDR and HGMI…SDGT. S359 carries the post-translational modification Phosphoserine. The interaction with MCM7 stretch occupies residues 432–681; sequence LVEPEEVVEM…IIEDYESDGT (250 aa). Over residues 631–662 the composition is skewed to polar residues; sequence EPTQATVPETWSLPLSQNSASELPASQPQPFS. At T633 the chain carries Phosphothreonine; by ATM. Phosphoserine; by ATR and ATM occurs at positions 646 and 656. A compositionally biased stretch (acidic residues) spans 666 to 681; it reads DMEENIIIEDYESDGT.

Belongs to the rad17/RAD24 family. Part of a DNA-binding complex containing RFC2, RFC3, RFC4 and RFC5. Interacts with RAD1 and RAD9 within the 9-1-1 (RAD1-RAD9-HUS1) complex. Interacts with RAD9B, POLE, SNU13 and MCM7. DNA damage promotes interaction with ATR or ATM and disrupts interaction with the 9-1-1 (RAD1-RAD9-HUS1) complex. Interacts (when phosphorylated) with NBN; promoting recruitment of the MRN complex to DNA damage sites. Post-translationally, phosphorylation on Ser-646 and Ser-656 is cell cycle-regulated, enhanced by genotoxic stress, and required for activation of checkpoint signaling. Phosphorylation is mediated by ATR upon UV or replication arrest, whereas it may be mediated both by ATR and ATM upon ionizing radiation. Phosphorylation on both sites is required for interaction with RAD1 but dispensable for interaction with RFC3 or RFC4. Phosphorylation at Thr-633 by ATM in response to DNA damage promotes interaction with NBN and recruitment of the MRN complex to DNA damage sites. In terms of tissue distribution, overexpressed in various cancer cell lines and in colon carcinoma (at protein level). Isoform 2 and isoform 3 are the most abundant isoforms in non irradiated cells (at protein level). Ubiquitous at low levels. Highly expressed in testis, where it is expressed within the germinal epithelium of the seminiferous tubuli. Weakly expressed in seminomas (testicular tumors).

It is found in the nucleus. The protein localises to the chromosome. Functionally, essential for sustained cell growth, maintenance of chromosomal stability, and ATR-dependent checkpoint activation upon DNA damage. Has a weak ATPase activity required for binding to chromatin. Participates in the recruitment of the 9-1-1 (RAD1-RAD9-HUS1) complex and RHNO1 onto chromatin, and in CHEK1 activation. Involved in homologous recombination by mediating recruitment of the MRN complex to DNA damage sites. May also serve as a sensor of DNA replication progression. The chain is Cell cycle checkpoint protein RAD17 from Homo sapiens (Human).